Consider the following 44-residue polypeptide: Keratin-associated protein 20-3 (44 aa).

This sequence belongs to the KRTAP type 20 family. In terms of assembly, interacts with hair keratins.

Functionally, in the hair cortex, hair keratin intermediate filaments are embedded in an interfilamentous matrix, consisting of hair keratin-associated proteins (KRTAP), which are essential for the formation of a rigid and resistant hair shaft through their extensive disulfide bond cross-linking with abundant cysteine residues of hair keratins. The matrix proteins include the high-sulfur and high-glycine-tyrosine keratins. This Homo sapiens (Human) protein is Keratin-associated protein 20-3 (KRTAP20-3).